The chain runs to 4116 residues: Dynein axonemal heavy chain 3 (4116 aa).

Disordered regions lie at residues 1 to 68 and 137 to 172; these read MGAT…ANEE and VPRD…KEDS. The stem stretch occupies residues 1–1390; the sequence is MGATGRLELT…QVQIITTEAL (1390 aa). Residues 145 to 156 show a composition bias toward polar residues; that stretch reads GLPSSGNRSSSE. A coiled-coil region spans residues 785–852; sequence DLIKRCSEFE…NKEEELLEKE (68 aa). AAA regions lie at residues 1391–1612, 1672–1903, 2036–2284, and 2395–2646; these read YGYE…VLTA, KVLN…LHCK, KVPA…VIQG, and EFNN…LRRH. ATP contacts are provided by residues 1429 to 1436, 1710 to 1717, 2074 to 2081, and 2434 to 2441; these read GPAGTGKT, GDPMGGKT, GPTGTGKS, and GIGGSGRQ. The segment at 2661 to 2960 is stalk; the sequence is FKTLLNSKRQ…KDLEENIEIC (300 aa). AAA stretches follow at residues 3045 to 3275 and 3488 to 3712; these read LGDP…EISE and VREF…QIQM.

Belongs to the dynein heavy chain family. Consists of at least two heavy chains and a number of intermediate and light chains. In terms of tissue distribution, expressed primarily in trachea and testis, 2 tissues containing axonemal structures. Also expressed in lung.

It localises to the cytoplasm. The protein localises to the cytoskeleton. It is found in the cilium axoneme. Functionally, force generating protein of respiratory cilia. Produces force towards the minus ends of microtubules. Dynein has ATPase activity; the force-producing power stroke is thought to occur on release of ADP. Involved in sperm motility; implicated in sperm flagellar assembly. The chain is Dynein axonemal heavy chain 3 (DNAH3) from Homo sapiens (Human).